Consider the following 408-residue polypeptide: MASRSLGGLSGSRGGGGGGGGKKSLSARNAAVERRNLITVCRFSVKTLIDRSCFETIDDSSPEFNNFAAVLEQILSHRLKGQVTWFGYESPRSFWDYIRVACRKVSQNCICSIENMENVSSSRAKGRAWIRVALMEKHLSEYISTALRDFKTTRRFYEDGAIVLGEEANMLAGMLLGLNAIDFSFCLKGEGLDGTFPAVIDYTPYLKFEQSSDSISSDEEELRTFGSSDSESSTPENVGPPLILDENTWFNKCKRVRQKYQLTLEQKGYLEELLRLRENQLSESVSQNKILLQRIEDSDLAHKLEKEQLEYIIVELQDQLKSYQSLDQLSAEVSLSQASLDPSHSQEGDGKQDSLNFIGEGKEDTPSLLGLCGSLTSVASYKSLTSLKSNDCLASPTTELTSPGLTPS.

The tract at residues 1-25 (MASRSLGGLSGSRGGGGGGGGKKSL) is disordered. Positions 8–22 (GLSGSRGGGGGGGGK) are enriched in gly residues. The residue at position 13 (Arg13) is an Omega-N-methylarginine. The region spanning 58-190 (DDSSPEFNNF…IDFSFCLKGE (133 aa)) is the RUN domain. Positions 213–238 (DSISSDEEELRTFGSSDSESSTPENV) are disordered. 2 positions are modified to phosphoserine: Ser216 and Ser217. Residues 225–236 (FGSSDSESSTPE) show a composition bias toward polar residues. Residues 301–326 (AHKLEKEQLEYIIVELQDQLKSYQSL) are a coiled coil. The tract at residues 337–359 (QASLDPSHSQEGDGKQDSLNFIG) is disordered.

Belongs to the RUNDC3 family. In terms of assembly, interacts with RAP2A.

The sequence is that of RUN domain-containing protein 3B (Rundc3b) from Mus musculus (Mouse).